The primary structure comprises 132 residues: Vesicle transport protein GOT1A (132 aa).

At 1-16 the chain is on the cytoplasmic side; that stretch reads MISITEWQKIGVGTTG. Residues 17-37 traverse the membrane as a helical segment; that stretch reads FGIFFILFGMLLYFDSVLLAF. Residues 38 to 39 lie on the Lumenal side of the membrane; sequence GN. The helical transmembrane segment at 40–60 threads the bilayer; that stretch reads LLFLTGLSLIIGLRRTFSFFF. The Cytoplasmic portion of the chain corresponds to 61 to 68; that stretch reads QRHKFKGT. The helical transmembrane segment at 69 to 89 threads the bilayer; it reads SFFLGGVVIVLLRWPLLGMCL. At 90–100 the chain is on the lumenal side; that stretch reads ETYGFFSLFRG. A helical transmembrane segment spans residues 101 to 121; it reads FFPVAFGFLGSASNIPFLSAL. The Cytoplasmic portion of the chain corresponds to 122–132; that stretch reads FQRLQGTSSMV.

This sequence belongs to the GOT1 family.

It localises to the golgi apparatus membrane. Functionally, may be involved in fusion of ER-derived transport vesicles with the Golgi complex. The sequence is that of Vesicle transport protein GOT1A from Bos taurus (Bovine).